A 922-amino-acid chain; its full sequence is DNA gyrase subunit A (922 aa).

A compositionally biased stretch (low complexity) spans 1-14 (MTETPTDGGSTPPS). The tract at residues 1-24 (MTETPTDGGSTPPSDGGGPGGRIE) is disordered. The Topo IIA-type catalytic domain maps to 49–518 (LPDVRDGLKP…ADGDLSMEDL (470 aa)). The active-site O-(5'-phospho-DNA)-tyrosine intermediate is tyrosine 137. A GyrA-box motif is present at residues 545 to 551 (QRRGGKG). The tract at residues 861–922 (EANGDDELDE…TEPDPGESDG (62 aa)) is disordered. 2 stretches are compositionally biased toward acidic residues: residues 863-890 (NGDD…DESA) and 912-922 (DTEPDPGESDG).

The protein belongs to the type II topoisomerase GyrA/ParC subunit family. In terms of assembly, heterotetramer, composed of two GyrA and two GyrB chains. In the heterotetramer, GyrA contains the active site tyrosine that forms a transient covalent intermediate with DNA, while GyrB binds cofactors and catalyzes ATP hydrolysis.

Its subcellular location is the cytoplasm. The catalysed reaction is ATP-dependent breakage, passage and rejoining of double-stranded DNA.. In terms of biological role, a type II topoisomerase that negatively supercoils closed circular double-stranded (ds) DNA in an ATP-dependent manner to modulate DNA topology and maintain chromosomes in an underwound state. Negative supercoiling favors strand separation, and DNA replication, transcription, recombination and repair, all of which involve strand separation. Also able to catalyze the interconversion of other topological isomers of dsDNA rings, including catenanes and knotted rings. Type II topoisomerases break and join 2 DNA strands simultaneously in an ATP-dependent manner. This chain is DNA gyrase subunit A, found in Nocardioides sp. (strain ATCC BAA-499 / JS614).